Consider the following 523-residue polypeptide: Cytidine and dCMP deaminase domain-containing protein 1 (523 aa).

Polar residues predominate over residues 1–11 (MKETDQMQSLE). Disordered stretches follow at residues 1–27 (MKET…GSMT) and 55–81 (QGQK…RVST). The 99-residue stretch at 71–169 (GDNEELTRVS…SLLTEASSSE (99 aa)) folds into the CMP/dCMP-type deaminase 1 domain. Zn(2+) contacts are provided by H110, C135, and C138. The short motif at 272-284 (NLRQNMKDLILLL) is the Nuclear export signal element. Residues 318 to 483 (EVARHCMVQA…LNPSEAYSLD (166 aa)) enclose the CMP/dCMP-type deaminase 2 domain. H399 lines the Zn(2+) pocket. The active-site Proton donor is E401. Zn(2+) contacts are provided by C427 and C430. Residues 478–523 (EAYSLDPNEPERRENGVLRRRSAKDEQRSSKRPRLETRSAGRATLQ) form a disordered region. Residues 486–516 (EPERRENGVLRRRSAKDEQRSSKRPRLETRS) show a composition bias toward basic and acidic residues. Positions 489 to 511 (RRENGVLRRRSAKDEQRSSKRPR) match the Bipartite nuclear localization signal motif.

The protein belongs to the cytidine and deoxycytidylate deaminase family. It depends on Zn(2+) as a cofactor.

It localises to the cytoplasm. The protein resides in the nucleus. It carries out the reaction 2'-deoxycytidine + H2O + H(+) = 2'-deoxyuridine + NH4(+). The catalysed reaction is cytidine + H2O + H(+) = uridine + NH4(+). Catalyzes the deamination of cytidine and deoxycytidine into uridine and deoxyuridine, respectively. May play an important role in testicular development and spermatogenesis. The polypeptide is Cytidine and dCMP deaminase domain-containing protein 1 (Cdadc1) (Mus musculus (Mouse)).